The following is a 1226-amino-acid chain: E3 ubiquitin-protein ligase mind-bomb (1226 aa).

Positions 1-12 (MSCAATLSSAKD) are enriched in polar residues. Disordered stretches follow at residues 1–42 (MSCA…NTNT) and 66–87 (GGGG…AGGV). Gly residues predominate over residues 19 to 30 (SGGGGGGGGGGA). Composition is skewed to low complexity over residues 31–42 (PTNSNTNTNTNT) and 73–86 (GGTT…AAGG). Residues 100–168 (VRRFSMEGVG…AYDLRILDSA (69 aa)) enclose the MIB/HERC2 1 domain. The segment at 174–226 (HEGTMCDTCRQQPIFGIRWKCAECINYDLCSICYHGDKHHLRHRFYRITTPGG) adopts a ZZ-type zinc-finger fold. Zn(2+)-binding residues include Cys-179, Cys-182, Cys-194, Cys-197, Cys-203, Cys-206, His-212, and His-216. The MIB/HERC2 2 domain maps to 237–315 (SKKVLARGIF…MADLKVVNDA (79 aa)). ANK repeat units lie at residues 567–596 (AGHT…DVEI), 600–629 (DGDR…DLNA), 633–662 (RRQT…HPSL), 666–695 (EGDT…DITL), 699–731 (NGFN…IVEE), 735–765 (DGYT…NMDR), 769–798 (NLQT…DLNI), and 802–833 (DGDT…KLLM). The tract at residues 890–919 (TDDSELPGNVAGTSSSARARAASGSLNQSS) is disordered. Residues 900–914 (AGTSSSARARAASGS) are compositionally biased toward low complexity. 2 consecutive RING-type zinc fingers follow at residues 970–1005 (CLVC…LICR) and 1017–1052 (CLVC…VLCR). Positions 1159–1181 (VNNFQMDDVQKLKQQLQDIKEQT) form a coiled coil. The segment at 1183 to 1216 (CPVCFDRIKNMVFLCGHGTCQMCGDQIEGCPICR) adopts an RING-type 3 zinc-finger fold.

In terms of assembly, interacts with intracellular domain of Dl and Ser. As to expression, ubiquitous in the wing imaginal disk (at protein level).

The protein resides in the cytoplasm. Its subcellular location is the cell cortex. It catalyses the reaction S-ubiquitinyl-[E2 ubiquitin-conjugating enzyme]-L-cysteine + [acceptor protein]-L-lysine = [E2 ubiquitin-conjugating enzyme]-L-cysteine + N(6)-ubiquitinyl-[acceptor protein]-L-lysine.. It participates in protein modification; protein ubiquitination. Functionally, E3 ubiquitin-protein ligase that mediates ubiquitination of Delta (Dl) and Serrate (Ser) receptors, which act as ligands of Notch proteins. Positively regulates the Notch signaling by ubiquitinating the intracellular domain of Dl and Ser, leading to endocytosis of Dl and Ser receptors. Regulates a subset of Notch signaling events, including wing margin specification, leg segmentation and vein determination, that are distinct from those events requiring neuralize (neur) activity. Also modulates lateral inhibition, a neur- and Dl-dependent signaling event, suggesting a distinct but partially complementary function with neur. The polypeptide is E3 ubiquitin-protein ligase mind-bomb (mib1) (Drosophila melanogaster (Fruit fly)).